The sequence spans 418 residues: E3 ubiquitin-protein ligase makorin-2 (418 aa).

2 consecutive C3H1-type zinc fingers follow at residues 2 to 29 (NTKHVTCRYFLHGVCREGGRCLFSHDLA) and 31 to 58 (SKPSTVCRFYQRGQCAYGARCRYDHVKP). The segment at 76-100 (ESTPPLLPTQEAAAPVTKSAPQRRE) is disordered. The segment at 164 to 191 (DAPQQLCPFAQAGGCHYGESCPYIHGNV) adopts a C3H1-type 3 zinc-finger fold. The makorin-type Cys-His stretch occupies residues 192 to 221 (CEICGLQVLHPYDQEQRGHHEKLCMANFER). An RING-type zinc finger spans residues 237–291 (CSICMERVYDKQSPSERRFGILSNCHHTYCLACIRQWRCARQFENPVIKSCPECR). The C3H1-type 4 zinc finger occupies 320–349 (GMGKKACKYFDQGRGTCPFGGKCLYLHAYP).

The protein resides in the cytoplasm. It is found in the nucleus. It carries out the reaction S-ubiquitinyl-[E2 ubiquitin-conjugating enzyme]-L-cysteine + [acceptor protein]-L-lysine = [E2 ubiquitin-conjugating enzyme]-L-cysteine + N(6)-ubiquitinyl-[acceptor protein]-L-lysine.. The protein operates within protein modification; protein ubiquitination. Its function is as follows. E3 ubiquitin ligase catalyzing the covalent attachment of ubiquitin moieties onto substrate proteins. Inhibits neurogenesis and axis formation during embryonic development by modulating the phosphatidylinositol 3-kinase (PI3K) pathway. Acts downstream of PI3K and akt1 to up-regulate gsk3b mRNA expression. The chain is E3 ubiquitin-protein ligase makorin-2 (mkrn2) from Xenopus tropicalis (Western clawed frog).